The sequence spans 481 residues: Cytochrome P450 monooxygenase dpfgJ (481 aa).

The chain crosses the membrane as a helical span at residues 23–43; sequence LVFTQAAVIGSILFVFLLGLY. The N-linked (GlcNAc...) asparagine glycan is linked to Asn-338. Residue Cys-427 coordinates heme.

It belongs to the cytochrome P450 family. Heme is required as a cofactor.

The protein resides in the membrane. It participates in secondary metabolite biosynthesis; terpenoid biosynthesis. In terms of biological role, cytochrome P450 monooxygenase; part of the gene cluster that mediates the biosynthesis of diterpenoid pyrones. The first step of the pathway is the synthesis of the alpha-pyrone moiety by the polyketide synthase dpfgA via condensation of one acetyl-CoA starter unit with 3 malonyl-CoA units and 2 methylations. The alpha-pyrone is then combined with geranylgeranyl pyrophosphate (GGPP) formed by the GGPP synthase dpfgD through the action of the prenyltransferase dpfgC to yield a linear alpha-pyrone diterpenoid. Subsequent steps in the diterpenoid pyrone biosynthetic pathway involve the decalin core formation, which is initiated by the epoxidation of the C10-C11 olefin by the FAD-dependent oxidoreductase dpfgE, and is followed by a cyclization cascade catalyzed by the terpene cyclase dpfgB. The short chain dehydrogenase/reductase dpfgG then oxidizes the 8S hydroxy group to a ketone and the short chain dehydrogenase/reductase dpfgH reduces the ketone to the 8R hydroxy group to yield higginsianin B. Higginsianin B is further methylated by the methyltransferase dpfgI to produce the intermediate named FDDP B. The cytochrome P450 monooxygenase dfgpJ then catalyzes a three-step oxidation at C-27 to generate a carboxylic acid as well as C-26 hydroxylation. Finally, methyltransferase dpfgK methylates the carboxylic acid generated by dpfgJ, yielding the final diterpenoid pyrones from the pathway which were named FDDP D and FDDP E. This Gibberella zeae (strain ATCC MYA-4620 / CBS 123657 / FGSC 9075 / NRRL 31084 / PH-1) (Wheat head blight fungus) protein is Cytochrome P450 monooxygenase dpfgJ.